A 243-amino-acid chain; its full sequence is ADP-ribosylation factor-like protein 10 (243 aa).

GTP contacts are provided by residues 83–90, 127–131, and 184–187; these read GLDGSGKS, EIGGS, and NKQD.

The protein belongs to the small GTPase superfamily. Arf family.

The sequence is that of ADP-ribosylation factor-like protein 10 (Arl10) from Mus musculus (Mouse).